The chain runs to 309 residues: Dermonecrotic toxin LarSicTox-alphaIB2bi (309 aa).

A signal peptide is located at residue valine 1. The propeptide occupies 2–27 (RATEKFAPIYFFCHPLQSAETDVAER). Histidine 38 is an active-site residue. Glutamate 58 and aspartate 60 together coordinate Mg(2+). Catalysis depends on histidine 74, which acts as the Nucleophile. Cystine bridges form between cysteine 78-cysteine 84 and cysteine 80-cysteine 223. Aspartate 118 serves as a coordination point for Mg(2+). Asparagine 286 is a glycosylation site (N-linked (GlcNAc...) asparagine).

The protein belongs to the arthropod phospholipase D family. Class II subfamily. Mg(2+) is required as a cofactor. As to expression, expressed by the venom gland.

The protein localises to the secreted. The enzyme catalyses an N-(acyl)-sphingosylphosphocholine = an N-(acyl)-sphingosyl-1,3-cyclic phosphate + choline. It carries out the reaction N-hexanoyl-sphing-4-enine-1-phosphocholine = N-(hexanoyl)-sphing-4-enine-1,3-cyclic phosphate + choline. The catalysed reaction is N-(dodecanoyl)-sphing-4-enine-1-phosphocholine = N-dodecanoyl-sphing-4-enine-1,3-cyclic phosphate + choline. It catalyses the reaction a 1-acyl-sn-glycero-3-phosphocholine = a 1-acyl-sn-glycero-2,3-cyclic phosphate + choline. The enzyme catalyses 1-tetradecanoyl-sn-glycero-3-phosphocholine = 1-tetradecanoyl-sn-glycero-2,3-cyclic phosphate + choline. It carries out the reaction 1-octanoyl-sn-glycero-3-phosphocholine = 1-octanoyl-sn-glycero-2,3-cyclic phosphate + choline. The catalysed reaction is 1-hexadecanoyl-sn-glycero-3-phosphocholine = 1-hexadecanoyl-sn-glycero-2,3-cyclic phosphate + choline. It catalyses the reaction an N-(acyl)-sphingosylphosphoethanolamine = an N-(acyl)-sphingosyl-1,3-cyclic phosphate + ethanolamine. The enzyme catalyses N-dodecanoyl-heptadecasphing-4-enine-1-phosphoethanolamine = N-dodecanoyl-heptadecasphing-4-enine-1,3-cyclic phosphate + ethanolamine. Functionally, dermonecrotic toxins cleave the phosphodiester linkage between the phosphate and headgroup of certain phospholipids (sphingolipid and lysolipid substrates), forming an alcohol (often choline) and a cyclic phosphate. This toxin acts on sphingomyelin (SM) with high activity and on lysophosphatidylcholine (LPC) and ceramide phosphoethanolamine (CPE) with low activity. In vivo, shows potent insecticidal activities. On mammals, induces dermonecrosis, hemolysis, increased vascular permeability, edema, inflammatory response, and platelet aggregation. This Loxosceles arizonica (Arizona brown spider) protein is Dermonecrotic toxin LarSicTox-alphaIB2bi.